The sequence spans 1186 residues: MDISTRSKDPGSAERTAQKRKFPSPPHSSNGHSPQDTSTSPIKKKKKPGLLNSNNKEQSELRHGPFYYMKQPLTTDPVDVVPQDGRNDFYCWVCHREGQVLCCELCPRVYHAKCLRLTSEPEGDWFCPECEKITVAECIETQSKAMTMLTIEQLSYLLKFAIQKMKQPGTDAFQKPVPLEQHPDYAEYIFHPMDLCTLEKNAKKKMYGCTEAFLADAKWILHNCIIYNGGNHKLTQIAKVVIKICEHEMNEIEVCPECYLAACQKRDNWFCEPCSNPHPLVWAKLKGFPFWPAKALRDKDGQVDARFFGQHDRAWVPINNCYLMSKEIPFSVKKTKSIFNSAMQEMEVYVENIRRKFGVFNYSPFRTPYTPNSQYQMLLDPTNPSAGTAKIDKQEKVKLNFDMTASPKILMSKPVLSGGTGRRISLSDMPRSPMSTNSSVHTGSDVEQDAEKKATSSHFSASEESMDFLDKSTASPASTKTGQAGSLSGSPKPFSPQLSAPITTKTDKTSTTGSILNLNLDRSKAEMDLKELSESVQQQSTPVPLISPKRQIRSRFQLNLDKTIESCKAQLGINEISEDVYTAVEHSDSEDSEKSDSSDSEYISDDEQKSKNEPEDTEDKEGCQMDKEPSAVKKKPKPTNPVEIKEELKSTSPASEKADPGAVKDKASPEPEKDFSEKAKPSPHPIKDKLKGKDETDSPTVHLGLDSDSESELVIDLGEDHSGREGRKNKKEPKEPSPKQDVVGKTPPSTTVGSHSPPETPVLTRSSAQTSAAGATATTSTSSTVTVTAPAPAATGSPVKKQRPLLPKETAPAVQRVVWNSSSKFQTSSQKWHMQKMQRQQQQQQQQNQQQQPQSSQGTRYQTRQAVKAVQQKEITQSPSTSTITLVTSTQSSPLVTSSGSMSTLVSSVNADLPIATASADVAADIAKYTSKMMDAIKGTMTEIYNDLSKNTTGSTIAEIRRLRIEIEKLQWLHQQELSEMKHNLELTMAEMRQSLEQERDRLIAEVKKQLELEKQQAVDETKKKQWCANCKKEAIFYCCWNTSYCDYPCQQAHWPEHMKSCTQSATAPQQEADAEVNTETLNKSSQGSSSSTQSAPSETASASKEKETSAEKSKESGSTLDLSGSRETPSSILLGSNQGSDHSRSNKSSWSSSDEKRGSTRSDHNTSTSTKSLLPKESRLDTFWD.

The span at 1–12 (MDISTRSKDPGS) shows a compositional bias: basic and acidic residues. The disordered stretch occupies residues 1 to 57 (MDISTRSKDPGSAERTAQKRKFPSPPHSSNGHSPQDTSTSPIKKKKKPGLLNSNNKE). A required for interaction with CCNT1 region spans residues 1–850 (MDISTRSKDP…QQQQQQQNQQ (850 aa)). S12 participates in a covalent cross-link: Glycyl lysine isopeptide (Lys-Gly) (interchain with G-Cter in SUMO2). Phosphoserine is present on S24. Glycyl lysine isopeptide (Lys-Gly) (interchain with G-Cter in SUMO2) cross-links involve residues K56 and K70. Residues 75–268 (TDPVDVVPQD…YLAACQKRDN (194 aa)) are interaction with histone H3K4me0. The interaction with histone H3K14ac stretch occupies residues 75–406 (TDPVDVVPQD…VKLNFDMTAS (332 aa)). The segment at 88–133 (DFYCWVCHREGQVLCCELCPRVYHAKCLRLTSEPEGDWFCPECEKI) adopts a PHD-type zinc-finger fold. Positions 88–327 (DFYCWVCHRE…INNCYLMSKE (240 aa)) are required for interaction with histone H3 and histone H4. 8 residues coordinate Zn(2+): C91, C94, C103, C106, H111, C114, C127, and C130. In terms of domain architecture, Bromo spans 145–252 (AMTMLTIEQL…KICEHEMNEI (108 aa)). Residues C255, C258, and C274 each contribute to the Zn(2+) site. Residues 277-327 (PHPLVWAKLKGFPFWPAKALRDKDGQVDARFFGQHDRAWVPINNCYLMSKE) enclose the PWWP domain. K390 is covalently cross-linked (Glycyl lysine isopeptide (Lys-Gly) (interchain with G-Cter in SUMO2)). At T404 the chain carries Phosphothreonine. At S406 the chain carries Phosphoserine. Residues 412–512 (SKPVLSGGTG…TTKTDKTSTT (101 aa)) form a disordered region. Position 413 is an N6-acetyllysine; alternate (K413). Residue K413 forms a Glycyl lysine isopeptide (Lys-Gly) (interchain with G-Cter in SUMO2); alternate linkage. A phosphoserine mark is found at S417, S425, and S432. A compositionally biased stretch (polar residues) spans 433 to 442 (PMSTNSSVHT). Position 444 is a phosphoserine (S444). A Glycyl lysine isopeptide (Lys-Gly) (interchain with G-Cter in SUMO2) cross-link involves residue K453. Residues S460, S462, S465, S486, S490, and S495 each carry the phosphoserine modification. Residues 472–489 (STASPASTKTGQAGSLSG) show a composition bias toward polar residues. A Glycyl lysine isopeptide (Lys-Gly) (interchain with G-Cter in SUMO2) cross-link involves residue K505. Phosphoserine is present on residues S514 and S523. K530 is covalently cross-linked (Glycyl lysine isopeptide (Lys-Gly) (interchain with G-Cter in SUMO2)). The residue at position 541 (T541) is a Phosphothreonine. Residue S547 is modified to Phosphoserine. K549 is covalently cross-linked (Glycyl lysine isopeptide (Lys-Gly) (interchain with G-Cter in SUMO2)). T563 is modified (phosphothreonine). The interval 582–884 (TAVEHSDSED…ITQSPSTSTI (303 aa)) is disordered. Composition is skewed to basic and acidic residues over residues 585-597 (EHSD…KSDS) and 606-631 (DEQK…EPSA). Residues K611 and K645 each participate in a glycyl lysine isopeptide (Lys-Gly) (interchain with G-Cter in SUMO2) cross-link. 2 positions are modified to phosphoserine: S652 and S655. Residues 656–696 (EKADPGAVKDKASPEPEKDFSEKAKPSPHPIKDKLKGKDET) are compositionally biased toward basic and acidic residues. K657 participates in a covalent cross-link: Glycyl lysine isopeptide (Lys-Gly) (interchain with G-Cter in SUMO2). 5 positions are modified to phosphoserine: S668, S682, S707, S709, and S737. The segment covering 718–738 (GEDHSGREGRKNKKEPKEPSP) has biased composition (basic and acidic residues). At T746 the chain carries Phosphothreonine. S754 and S756 each carry phosphoserine. Residues 766–799 (SSAQTSAAGATATTSTSSTVTVTAPAPAATGSPV) show a composition bias toward low complexity. Residues 818–832 (VWNSSSKFQTSSQKW) are compositionally biased toward polar residues. A compositionally biased stretch (low complexity) spans 835 to 857 (QKMQRQQQQQQQQNQQQQPQSSQ). Over residues 873–884 (KEITQSPSTSTI) the composition is skewed to polar residues. Positions 875–1047 (ITQSPSTSTI…YCCWNTSYCD (173 aa)) are required for homodimerization. Zn(2+) contacts are provided by C1028, C1031, C1039, C1040, C1046, C1050, H1058, and C1062. The segment at 1028–1062 (CANCKKEAIFYCCWNTSYCDYPCQQAHWPEHMKSC) adopts an MYND-type zinc-finger fold. The tract at residues 1028-1062 (CANCKKEAIFYCCWNTSYCDYPCQQAHWPEHMKSC) is required for recruitment to DNA damage sites and for interaction with the NuRD complex, CHD4, HDAC1, HDAC2 and KDM1A. The interval 1071–1186 (QEADAEVNTE…KESRLDTFWD (116 aa)) is disordered. Residues 1085-1103 (SSQGSSSSTQSAPSETASA) show a composition bias toward low complexity. Over residues 1104-1116 (SKEKETSAEKSKE) the composition is skewed to basic and acidic residues. Residue K1115 forms a Glycyl lysine isopeptide (Lys-Gly) (interchain with G-Cter in SUMO2) linkage. Position 1119 is a phosphoserine (S1119). The segment covering 1121–1140 (LDLSGSRETPSSILLGSNQG) has biased composition (polar residues). S1141 is subject to Phosphoserine. Residues 1147 to 1186 (NKSSWSSSDEKRGSTRSDHNTSTSTKSLLPKESRLDTFWD) form an interaction with PRKCB1 region. 2 stretches are compositionally biased toward basic and acidic residues: residues 1154 to 1165 (SDEKRGSTRSDH) and 1175 to 1186 (LPKESRLDTFWD).

In terms of assembly, monomer and homodimer. Interacts with NuRD subcomplexes containing GATAD2A. Interacts with the histone deacetylase NuRD complex subunit CHD4; the interaction is direct, appears to occur with monomeric ZMYND8, and is increased following DNA damage. Interacts (via N-terminus) with the P-TEFb complex subunit CCNT1 (via central region); the interaction is direct and the association appears to occur between homodimeric ZMYND8 and the activated form of the P-TEFb complex. Interacts (via N-terminus) with DBN1 (via ADF-H domain); the interaction leads to sequestering of ZMYND8 in the cytoplasm. Interacts with the P-TEFb complex subunit CDK9; the association appears to occur between homodimeric ZMYND8 and the activated form of the P-TEFb complex. Interacts with EZH2; the interaction is dependent on the presence of chromatin. Interacts (via MYND domain) with the NuRD complex subunit GATAD2A. Interacts with histone H3 (via N-terminus) that is both methylated at 'Lys-4' (H3K4me1) and acetylated at 'Lys-14' (H3K14ac), with histone H3 (via N-terminus) unmodified at 'Lys-4' (H3K4me0) and acetylated at 'Lys-14' (H3K14ac), and with histone H3 (via N-terminus) di-methylated at 'Lys-36' (H3K36me2). Interacts (via Bromo domain) with histone H4 acetylated at 'Lys-16' (H4K16ac). Interacts with HDAC1. Interacts with HDAC2. Interacts with KDM1A. Interacts with KDM5C. Interacts with KDM5D. Interacts in vitro with PRKCB. Interacts with RNA polymerase II subunit POLR2A phosphorylated at 'Ser-5'. Interacts with ZNF592. Interacts with ZNF687. Does not interact with GATAD2B. In terms of tissue distribution, expressed in neurons (at protein level). Absent in astrocytes (at protein level). Expressed in all tissues examined with highest expression in brain, lung, pancreas, and placenta. Expressed in cutaneous T-cell lymphomas (CTCL).

It is found in the nucleus. The protein localises to the chromosome. The protein resides in the cytoplasm. Its function is as follows. Chromatin reader that recognizes dual histone modifications such as histone H3.1 dimethylated at 'Lys-36' and histone H4 acetylated at 'Lys-16' (H3.1K36me2-H4K16ac) and histone H3 methylated at 'Lys-4' and histone H4 acetylated at 'Lys-14' (H3K4me1-H3K14ac). May act as a transcriptional corepressor for KDM5D by recognizing the dual histone signature H3K4me1-H3K14ac. May also act as a transcriptional corepressor for KDM5C and EZH2. Recognizes acetylated histone H4 and recruits the NuRD chromatin remodeling complex to damaged chromatin for transcriptional repression and double-strand break repair by homologous recombination. Also activates transcription elongation by RNA polymerase II through recruiting the P-TEFb complex to target promoters. Localizes to H3.1K36me2-H4K16ac marks at all-trans-retinoic acid (ATRA)-responsive genes and positively regulates their expression. Promotes neuronal differentiation by associating with regulatory regions within the MAPT gene, to enhance transcription of a protein-coding MAPT isoform and suppress the non-coding MAPT213 isoform. Suppresses breast cancer, and prostate cancer cell invasion and metastasis. This is MYND-type zinc finger-containing chromatin reader ZMYND8 (ZMYND8) from Homo sapiens (Human).